The sequence spans 223 residues: Kinetochore protein Spc25 (223 aa).

Positions 51-119 (RHQRKVGKLQ…NEIMERIQTL (69 aa)) form a coiled coil.

The protein belongs to the SPC25 family. As to quaternary structure, component of the Ndc80 complex, which is composed of Ndc80, Nuf2 and Spc25.

Its subcellular location is the nucleus. It localises to the chromosome. It is found in the centromere. The protein localises to the kinetochore. In terms of biological role, acts as a component of the essential kinetochore-associated Ndc80 complex, which is required for chromosome segregation and spindle checkpoint activity during meiosis and mitosis. Required for kinetochore integrity and the organization of stable microtubule binding sites in the outer plate of the kinetochore. Participates in SAC signaling that responds specifically to disruptions in spindle microtubule dynamics. The NDC80 complex synergistically enhances the affinity of the SKA1 complex for microtubules and may allow the NDC80 complex to track depolymerizing microtubules. This is Kinetochore protein Spc25 from Drosophila teissieri (Fruit fly).